Reading from the N-terminus, the 1130-residue chain is Sterol regulatory element-binding protein 2 (1130 aa).

Residues 1-50 form a transcriptional activation (acidic) region; that stretch reads MDESSELGVLETMETLTELGDELTLGDIDEMLQFVSNQVGEFPDLFSEQL. Over 1–470 the chain is Cytoplasmic; that stretch reads MDESSELGVL…VALGMVDRSR (470 aa). Positions 53 to 133 are disordered; that stretch reads SFPGGGSNGG…PQPQPQPPAQ (81 aa). The span at 55–64 shows a compositional bias: gly residues; sequence PGGGSNGGSG. Residues 83-93 are compositionally biased toward polar residues; that stretch reads RSFSQVPLSTF. Over residues 94 to 104 the composition is skewed to low complexity; that stretch reads SPSAASPQAPA. Over residues 111–131 the composition is skewed to pro residues; that stretch reads PTPPRATPVLQPRPQPQPQPP. Positions 226-480 are interaction with LMNA; the sequence is QQVPVLVQPQ…ILLCVLTFLG (255 aa). One can recognise a bHLH domain in the interval 319–369; that stretch reads ERRTTHNIIEKRYRSSINDKIIELKDLVMGTDAKMHKSGVLRKAIDYIKYL. The interval 369 to 390 is leucine-zipper; sequence LQQVNHKLRQENMVLKLANQKN. Residue Lys453 forms a Glycyl lysine isopeptide (Lys-Gly) (interchain with G-Cter in SUMO2) linkage. The chain crosses the membrane as a helical span at residues 471–491; that stretch reads ILLCVLTFLGLSFNPLTSLLQ. Residues 492–522 lie on the Lumenal side of the membrane; it reads WGGAHNTDQHPYSGSGRSVLSLESGAGGWFD. Residues 523-543 traverse the membrane as a helical segment; the sequence is WMVPTLLLWLVNGVIVLSVFV. Topologically, residues 544–1130 are cytoplasmic; it reads KLLVHGEPVI…LGGGTAIAAS (587 aa). The residue at position 1087 (Ser1087) is a Phosphoserine.

It belongs to the SREBP family. As to quaternary structure, forms a tight complex with SCAP, the SCAP-SREBP complex, in the endoplasmic reticulum membrane and the Golgi apparatus. Interacts with PAQR3; the interaction anchors the SCAP-SREBP complex to the Golgi apparatus in low cholesterol conditions. Interacts (via C-terminal domain) with RNF139. In terms of assembly, homodimer; efficient DNA binding of the soluble transcription factor fragment requires dimerization with another bHLH protein. Interacts with LMNA. In terms of processing, processed in the Golgi apparatus, releasing the protein from the membrane. At low cholesterol the SCAP-SREBP complex is recruited into COPII vesicles for export from the endoplasmic reticulum. In the Golgi, complex SREBPs are cleaved sequentially by site-1 (MBTPS1, S1P) and site-2 (MBTPS2, S2P) proteases. The first cleavage by site-1 protease occurs within the luminal loop, the second cleavage by site-2 protease occurs within the first transmembrane domain, releasing the transcription factor from the Golgi membrane. Apoptosis triggers cleavage by the cysteine proteases caspase-3 and caspase-7. Cleavage and activation is induced by mediated cholesterol efflux. Phosphorylated by AMPK, leading to suppress protein processing and nuclear translocation, and repress target gene expression. Post-translationally, SCAP-free SREBF2 is ubiquitinated by the BCR(ARMC5) complex, leading to its degradation. In terms of processing, ubiquitinated; the nuclear form has a rapid turnover and is rapidly ubiquitinated and degraded by the proteasome in the nucleus.

The protein resides in the endoplasmic reticulum membrane. The protein localises to the golgi apparatus membrane. Its subcellular location is the cytoplasmic vesicle. It is found in the COPII-coated vesicle membrane. It localises to the nucleus. Activation by cleavage is down-regulated upon activation of SIRT3-dependent PRKAA1/AMPK-alpha signaling cascade which leads to inhibition of ATP-consuming lipogenesis to restore cellular energy balance. Functionally, precursor of the transcription factor form (Processed sterol regulatory element-binding protein 2), which is embedded in the endoplasmic reticulum membrane. Low sterol concentrations promote processing of this form, releasing the transcription factor form that translocates into the nucleus and activates transcription of genes involved in cholesterol biosynthesis. In terms of biological role, key transcription factor that regulates expression of genes involved in cholesterol biosynthesis. Binds to the sterol regulatory element 1 (SRE-1) (5'-ATCACCCCAC-3'). Has dual sequence specificity binding to both an E-box motif (5'-ATCACGTGA-3') and to SRE-1 (5'-ATCACCCCAC-3'). Regulates transcription of genes related to cholesterol synthesis pathway. This is Sterol regulatory element-binding protein 2 from Mus musculus (Mouse).